A 193-amino-acid polypeptide reads, in one-letter code: Pyridoxal 5'-phosphate synthase subunit PdxT (193 aa).

G50–S52 contributes to the L-glutamine binding site. C82 (nucleophile) is an active-site residue. Residues R109 and I136–R137 each bind L-glutamine. Active-site charge relay system residues include H172 and E174.

It belongs to the glutaminase PdxT/SNO family. In terms of assembly, in the presence of PdxS, forms a dodecamer of heterodimers. Only shows activity in the heterodimer.

It catalyses the reaction aldehydo-D-ribose 5-phosphate + D-glyceraldehyde 3-phosphate + L-glutamine = pyridoxal 5'-phosphate + L-glutamate + phosphate + 3 H2O + H(+). The catalysed reaction is L-glutamine + H2O = L-glutamate + NH4(+). Its pathway is cofactor biosynthesis; pyridoxal 5'-phosphate biosynthesis. Catalyzes the hydrolysis of glutamine to glutamate and ammonia as part of the biosynthesis of pyridoxal 5'-phosphate. The resulting ammonia molecule is channeled to the active site of PdxS. The protein is Pyridoxal 5'-phosphate synthase subunit PdxT of Streptococcus pneumoniae serotype 19F (strain G54).